The following is a 589-amino-acid chain: Protein kinase G11A (589 aa).

The tract at residues 1 to 167 is disordered; that stretch reads MASKAMPRAP…SACSSISSVT (167 aa). 2 stretches are compositionally biased toward polar residues: residues 15–36 and 63–76; these read NLQSLKLCSQNDSSLETTSPSK and TQHQNESIDLTGSN. The segment covering 91–100 has biased composition (basic and acidic residues); the sequence is RLADEEKGVV. The segment covering 142 to 165 has biased composition (low complexity); that stretch reads SSSRCRPSTSSDVSDESACSSISS. The region spanning 195–533 is the Protein kinase domain; it reads FKLLKKLGCG…ATEIKQHPFF (339 aa). Residues 201–209 and lysine 224 each bind ATP; that span reads LGCGDIGSV. The Proton acceptor role is filled by aspartate 320. A disordered region spans residues 551–589; that stretch reads RPVEIERPPKQPVSTSEPAAAPSDAAQKSSDSYLEFDFF.

This sequence belongs to the protein kinase superfamily. Ser/Thr protein kinase family.

It carries out the reaction L-seryl-[protein] + ATP = O-phospho-L-seryl-[protein] + ADP + H(+). The enzyme catalyses L-threonyl-[protein] + ATP = O-phospho-L-threonyl-[protein] + ADP + H(+). May play a role in the regulation of metabolism and signal transduction processes. In Oryza sativa subsp. japonica (Rice), this protein is Protein kinase G11A.